We begin with the raw amino-acid sequence, 571 residues long: Urease subunit alpha (571 aa).

Residues 133–571 form the Urease domain; the sequence is GGIDTHVHFI…LPLTQRYFLF (439 aa). The Ni(2+) site is built by His-138, His-140, and Lys-221. An N6-carboxylysine modification is found at Lys-221. His-223 is a binding site for substrate. 2 residues coordinate Ni(2+): His-250 and His-276. Catalysis depends on His-324, which acts as the Proton donor. Position 364 (Asp-364) interacts with Ni(2+).

It belongs to the metallo-dependent hydrolases superfamily. Urease alpha subunit family. In terms of assembly, heterotrimer of UreA (gamma), UreB (beta) and UreC (alpha) subunits. Three heterotrimers associate to form the active enzyme. Requires Ni cation as cofactor. Post-translationally, carboxylation allows a single lysine to coordinate two nickel ions.

Its subcellular location is the cytoplasm. The enzyme catalyses urea + 2 H2O + H(+) = hydrogencarbonate + 2 NH4(+). It participates in nitrogen metabolism; urea degradation; CO(2) and NH(3) from urea (urease route): step 1/1. The protein is Urease subunit alpha of Staphylococcus aureus (strain MRSA252).